Consider the following 72-residue polypeptide: U10-myrmicitoxin-Tb1a (72 aa).

Residues 1 to 26 (MRVSYLSLTLTIVVVIAIIYAPETEA) form the signal peptide. Residues 27–36 (KAWADADAEA) constitute a propeptide that is removed on maturation.

This sequence belongs to the formicidae venom precursor-01 superfamily. Expressed by the venom gland.

It localises to the secreted. In terms of biological role, in vivo, this neurotoxin paralyzes about 40% of blowflies (L.caesar) one hour after intrathoracic injection, when tested at high doses (28 nmol/g). The chain is U10-myrmicitoxin-Tb1a from Tetramorium bicarinatum (Tramp ant).